Reading from the N-terminus, the 159-residue chain is Cytochrome b6-f complex subunit 4 (159 aa).

3 helical membrane-spanning segments follow: residues 35–55 (ILIFGVVILGTIFGVIALAVL), 93–113 (LLGVVLMAAIPIGLALVPFIE), and 127–147 (ATAVFLIGTVVTMYLGIGAMI).

Belongs to the cytochrome b family. PetD subfamily. In terms of assembly, the 4 large subunits of the cytochrome b6-f complex are cytochrome b6, subunit IV (17 kDa polypeptide, PetD), cytochrome f and the Rieske protein, while the 4 small subunits are PetG, PetL, PetM and PetN. The complex functions as a dimer.

The protein localises to the cell inner membrane. Its function is as follows. Component of the cytochrome b6-f complex, which mediates electron transfer between photosystem II (PSII) and photosystem I (PSI), cyclic electron flow around PSI, and state transitions. The protein is Cytochrome b6-f complex subunit 4 of Gloeobacter violaceus (strain ATCC 29082 / PCC 7421).